The following is a 198-amino-acid chain: Segregation and condensation protein B (198 aa).

This sequence belongs to the ScpB family. In terms of assembly, homodimer. Homodimerization may be required to stabilize the binding of ScpA to the Smc head domains. Component of a cohesin-like complex composed of ScpA, ScpB and the Smc homodimer, in which ScpA and ScpB bind to the head domain of Smc. The presence of the three proteins is required for the association of the complex with DNA.

The protein resides in the cytoplasm. Functionally, participates in chromosomal partition during cell division. May act via the formation of a condensin-like complex containing Smc and ScpA that pull DNA away from mid-cell into both cell halves. This Streptococcus mutans serotype c (strain ATCC 700610 / UA159) protein is Segregation and condensation protein B.